The primary structure comprises 251 residues: tRNA (guanine-N(7)-)-methyltransferase (251 aa).

S-adenosyl-L-methionine contacts are provided by residues G71, 94-95 (EL), 128-129 (NS), and L148. D151 is an active-site residue. S-adenosyl-L-methionine is bound at residue 226 to 228 (TEE).

This sequence belongs to the class I-like SAM-binding methyltransferase superfamily. TrmB family.

Its subcellular location is the nucleus. The enzyme catalyses guanosine(46) in tRNA + S-adenosyl-L-methionine = N(7)-methylguanosine(46) in tRNA + S-adenosyl-L-homocysteine. It participates in tRNA modification; N(7)-methylguanine-tRNA biosynthesis. Catalyzes the formation of N(7)-methylguanine at position 46 (m7G46) in tRNA. The sequence is that of tRNA (guanine-N(7)-)-methyltransferase from Arabidopsis thaliana (Mouse-ear cress).